The sequence spans 339 residues: tRNA dimethylallyltransferase (339 aa).

36–43 (GPTGSGKT) is an ATP binding site. Residue 38–43 (TGSGKT) participates in substrate binding. Residues 61-64 (DSMQ) are interaction with substrate tRNA.

The protein belongs to the IPP transferase family. Monomer. It depends on Mg(2+) as a cofactor.

The catalysed reaction is adenosine(37) in tRNA + dimethylallyl diphosphate = N(6)-dimethylallyladenosine(37) in tRNA + diphosphate. In terms of biological role, catalyzes the transfer of a dimethylallyl group onto the adenine at position 37 in tRNAs that read codons beginning with uridine, leading to the formation of N6-(dimethylallyl)adenosine (i(6)A). This is tRNA dimethylallyltransferase from Chlamydia trachomatis serovar L2 (strain ATCC VR-902B / DSM 19102 / 434/Bu).